Reading from the N-terminus, the 465-residue chain is Ribosomal protein uS12 methylthiotransferase RimO (465 aa).

The MTTase N-terminal domain maps to 1-117; that stretch reads MKVGFISLGC…IVDICEGMPP (117 aa). Residues cysteine 10, cysteine 46, cysteine 80, cysteine 150, cysteine 154, and cysteine 157 each contribute to the [4Fe-4S] cluster site. A Radical SAM core domain is found at 136-369; sequence ATPRHFAYMK…AIQRKIARAR (234 aa). A TRAM domain is found at 371–442; that stretch reads RGLVGKEVPV…DYDVVGTLLA (72 aa).

Belongs to the methylthiotransferase family. RimO subfamily. Requires [4Fe-4S] cluster as cofactor.

The protein resides in the cytoplasm. The enzyme catalyses L-aspartate(89)-[ribosomal protein uS12]-hydrogen + (sulfur carrier)-SH + AH2 + 2 S-adenosyl-L-methionine = 3-methylsulfanyl-L-aspartate(89)-[ribosomal protein uS12]-hydrogen + (sulfur carrier)-H + 5'-deoxyadenosine + L-methionine + A + S-adenosyl-L-homocysteine + 2 H(+). Its function is as follows. Catalyzes the methylthiolation of an aspartic acid residue of ribosomal protein uS12. This chain is Ribosomal protein uS12 methylthiotransferase RimO, found in Solibacter usitatus (strain Ellin6076).